The following is a 638-amino-acid chain: Broad-specificity ulvan lyase (638 aa).

An N-terminal signal peptide occupies residues 1–27; it reads MKRRNFIQLSSLATIGMSLPSAGIVNA.

It belongs to the polysaccharide lyase 37 family.

It localises to the periplasm. The enzyme catalyses Endolytic cleavage of (1-&gt;4)-beta-galactosaminic bonds between N-acetylgalactosamine and either D-glucuronic acid or L-iduronic acid to produce a mixture of Delta(4)-unsaturated oligosaccharides of different sizes that are ultimately degraded to Delta(4)-unsaturated tetra- and disaccharides.. It carries out the reaction Elimination of sulfate, appears to act on linkages between N-acetyl-D-glucosamine and uronate. Product is an unsaturated sugar.. In terms of biological role, broad-specificity lyase involved in ulvan degradation. Ulvan is the main polysaccharide component of the Ulvales (green seaweed) cell wall. It is composed of disaccharide building blocks comprising 3-sulfated rhamnose (Rha3S) linked to D-glucuronic acid (GlcA), L-iduronic acid (IduA), or D-xylose (Xyl). Ulvan lyase catalyzes the endolytic cleavage of the glycosidic bond between Rha3S and the uronic acids GlcA or IduA, producing oligosaccharides that have unsaturated 4-deoxy-L-threo-hex-4-enopyranosiduronic acid (deltaUA) at the non-reducing end. This results eventually in the degradation of the ulvan polysaccharide into deltaUA-Rha3S disaccharides and deltaUA-Rha3S-Xyl-Rha3S tetrasaccharides. It is also able to degrade the glycosaminoglycans heparan sulfate and chondroitin sulfate. Not active against pectin, xanthan or alginate. In Formosa agariphila (strain DSM 15362 / KCTC 12365 / LMG 23005 / KMM 3901 / M-2Alg 35-1), this protein is Broad-specificity ulvan lyase.